The sequence spans 141 residues: Nucleoside diphosphate kinase (141 aa).

Lys-11, Phe-59, Arg-87, Thr-93, Arg-104, and Asn-114 together coordinate ATP. The Pros-phosphohistidine intermediate role is filled by His-117.

This sequence belongs to the NDK family. As to quaternary structure, homotetramer. Requires Mg(2+) as cofactor.

It is found in the cytoplasm. The catalysed reaction is a 2'-deoxyribonucleoside 5'-diphosphate + ATP = a 2'-deoxyribonucleoside 5'-triphosphate + ADP. It carries out the reaction a ribonucleoside 5'-diphosphate + ATP = a ribonucleoside 5'-triphosphate + ADP. In terms of biological role, major role in the synthesis of nucleoside triphosphates other than ATP. The ATP gamma phosphate is transferred to the NDP beta phosphate via a ping-pong mechanism, using a phosphorylated active-site intermediate. The protein is Nucleoside diphosphate kinase of Actinobacillus succinogenes (strain ATCC 55618 / DSM 22257 / CCUG 43843 / 130Z).